The chain runs to 193 residues: Ectoine TRAP transporter small permease protein TeaB (193 aa).

The next 4 membrane-spanning stretches (helical) occupy residues 33 to 55, 65 to 82, 103 to 125, and 145 to 167; these read ILAL…RFAL, VNRI…GYAA, RALM…YYSV, and IFII…LFTA.

It belongs to the TRAP transporter small permease family. In terms of assembly, the complex comprises the extracytoplasmic solute receptor protein TeaA, and the two transmembrane proteins TeaB and TeaC.

It is found in the cell inner membrane. Part of the tripartite ATP-independent periplasmic (TRAP) transport system TeaABC involved in the uptake of ectoine and hydroxyectoine in response to osmotic upshock. Probably functions as a recovery system for synthesized ectoine that leaks out of the cell. The protein is Ectoine TRAP transporter small permease protein TeaB (teaB) of Halomonas elongata (strain ATCC 33173 / DSM 2581 / NBRC 15536 / NCIMB 2198 / 1H9).